A 418-amino-acid chain; its full sequence is NADH-quinone oxidoreductase subunit D (418 aa).

Belongs to the complex I 49 kDa subunit family. As to quaternary structure, NDH-1 is composed of 14 different subunits. Subunits NuoB, C, D, E, F, and G constitute the peripheral sector of the complex.

The protein resides in the cell inner membrane. The enzyme catalyses a quinone + NADH + 5 H(+)(in) = a quinol + NAD(+) + 4 H(+)(out). Its function is as follows. NDH-1 shuttles electrons from NADH, via FMN and iron-sulfur (Fe-S) centers, to quinones in the respiratory chain. The immediate electron acceptor for the enzyme in this species is believed to be ubiquinone. Couples the redox reaction to proton translocation (for every two electrons transferred, four hydrogen ions are translocated across the cytoplasmic membrane), and thus conserves the redox energy in a proton gradient. In Neisseria meningitidis serogroup A / serotype 4A (strain DSM 15465 / Z2491), this protein is NADH-quinone oxidoreductase subunit D.